A 465-amino-acid chain; its full sequence is ATP-sulfurylase 3, chloroplastic (465 aa).

The N-terminal 49 residues, 1 to 49, are a transit peptide targeting the chloroplast; that stretch reads MASMSTVFPKPTSFISQPLTKSHKSDSVTTSISFPSNSKTRSLRTISVR.

The protein belongs to the sulfate adenylyltransferase family. Homotetramer.

The protein localises to the plastid. Its subcellular location is the chloroplast stroma. It carries out the reaction sulfate + ATP + H(+) = adenosine 5'-phosphosulfate + diphosphate. It functions in the pathway sulfur metabolism; hydrogen sulfide biosynthesis; sulfite from sulfate: step 1/3. The protein is ATP-sulfurylase 3, chloroplastic (APS3) of Arabidopsis thaliana (Mouse-ear cress).